A 359-amino-acid chain; its full sequence is GATA-binding factor 1-A (359 aa).

The disordered stretch occupies residues 1 to 21; sequence MDYTTLTTQDPDPNYTESGLA. 2 consecutive GATA-type zinc fingers follow at residues 178 to 202 and 232 to 256; these read CVNC…CNAC and CSNC…CNAC. Disordered stretches follow at residues 271 to 311 and 323 to 359; these read MKKE…SPYP and PMGH…VTPP. The span at 279 to 291 shows a compositional bias: basic residues; the sequence is RNRKVSSRSKKKK.

Expressed in the developing ventral blood island, and in both tadpole and adult erythrocytes.

It localises to the nucleus. In terms of biological role, transcription factor that acts synergistically with tal1/scl and lmo2 to specify embryonic dorsal mesoderm to a hematopoietic fate. This Xenopus laevis (African clawed frog) protein is GATA-binding factor 1-A (gata1-a).